The primary structure comprises 1293 residues: Cilia- and flagella-associated protein 57 A (1293 aa).

The WD 1 repeat unit spans residues 72–113; sequence PGTKGITCMTLSPSKRLLAWSEDCDSGIIVVFDLIKLDKLEK. Residues 117 to 143 are disordered; it reads QNYQEPSDKDKLDKQAEKDRRDRFEKE. Residues 122 to 143 show a composition bias toward basic and acidic residues; that stretch reads PSDKDKLDKQAEKDRRDRFEKE. WD repeat units lie at residues 309–348, 359–398, 411–450, 535–574, and 700–739; these read PKNEQFAIQCIQPYSKGFLVGGKECTILFYEKDVDLKNPY, DMKAMITSLLLTPNEEKLIVGVDSGQLLQVPFTSDSMQLN, FHSDKITGLDVCIRKSLVATCSVDKTVRIWNYSDNQLENS, RGSGKVRTIFWEEDDQGFYTGSTDGLVIYWRVDDNGPQKT, and SHFGPITRMRISFKDNYIFTAGEDGALIIYENKEKEYQVK. Coiled-coil stretches lie at residues 756–1016, 1045–1079, and 1209–1285; these read RDQY…REKT, IKELKRDIGPKEEEIAKMKEQIANMNSEILHFKRT, and INHL…QIQN.

Belongs to the CFAP57 family. In terms of assembly, forms a heterodimer with CFAP57C. Associates with components of the nexin-dynein regulatory complex (N-DRC) and the CFAP184:CFAP263 complex.

Its subcellular location is the cell projection. The protein resides in the cilium. Associates with components of the nexin-dynein regulatory complex (N-DRC), a key regulator of ciliary/flagellar motility, and might act as an inner dynein arm (IDA) hub or linkage. In Tetrahymena thermophila (strain SB210), this protein is Cilia- and flagella-associated protein 57 A (CFAP57A).